Reading from the N-terminus, the 530-residue chain is G2/mitotic-specific cyclin-B (530 aa).

Residues 76 to 152 form a disordered region; the sequence is ARVDSHWKKQ…EPTLKREDSN (77 aa). A compositionally biased stretch (low complexity) spans 121–144; it reads PTKTTVEPTKVTVKSSSSENVNEP. A Phosphoserine modification is found at serine 137.

The protein belongs to the cyclin family. Cyclin AB subfamily. As to quaternary structure, interacts with the protein kinase Cdk1 to form a serine/threonine kinase holoenzyme complex also known as maturation promoting factor (MPF). The cyclin subunit imparts substrate specificity to the complex.

Its function is as follows. Essential for the control of the cell cycle at the G2/M (mitosis) transition. This chain is G2/mitotic-specific cyclin-B (CycB), found in Drosophila melanogaster (Fruit fly).